The chain runs to 1200 residues: Chromosome partition protein Smc (1200 aa).

Residue 32-39 (PNGCGKSN) participates in ATP binding. Coiled coils occupy residues 171 to 219 (VTKY…AEKY) and 252 to 342 (LENL…MSEA). An SMC hinge domain is found at 528–644 (QGIFGLVADV…QDVATARAWT (117 aa)). 2 coiled-coil regions span residues 679-706 (ALQKKREIAELATEVARVEERYNEILTR) and 735-762 (LASQEKDLHKAGEDLARVRERVRALEVE). The segment at 763-795 (EGQLTQSHQALEHEEEASRGEVAHGQADREGRE) is disordered. A compositionally biased stretch (basic and acidic residues) spans 772 to 795 (ALEHEEEASRGEVAHGQADREGRE). The stretch at 1002–1039 (HAELSKRYDFLTAQKKDLQSSIEQLKEAIQRIDATSRE) forms a coiled coil.

It belongs to the SMC family. As to quaternary structure, homodimer. Probably forms the Structural Maintenance of Chromosome (SMC) condensin-like complex with ScpA and ScpB.

Its subcellular location is the cytoplasm. In terms of biological role, a conditionally essential component of the chromosome segregation machinery. Required for chromosome condensation and partitioning. Important for positioning of ParB-parS complexes (ori of replication) and of the ter replication site, as well as for segration of the ParB-parS complex and thus chromosome segregation. May act via the formation of a condensin-like complex containing Smc, ScpA and ScpB that pulls DNA away from mid-cell into both cell halves. The sequence is that of Chromosome partition protein Smc from Myxococcus xanthus (strain DK1622).